Reading from the N-terminus, the 478-residue chain is POU domain, class 2, transcription factor 2 (478 aa).

Disordered regions lie at residues 1 to 82 (MVHS…PPQA), 167 to 199 (QAVT…EASD), 275 to 298 (SSLP…GRRR), 357 to 391 (PCSA…PLSQ), and 409 to 478 (TLHP…PYQP). The span at 12-37 (RMSKPLEAEKQGLDSPSEHTDTERNG) shows a compositional bias: basic and acidic residues. Positions 38-60 (PDTNHQNPQNKTSPFSVSPTGPS) are enriched in polar residues. Positions 195 to 269 (EEASDLEELE…LLEKWLNDAE (75 aa)) constitute a POU-specific domain. Residues 275–285 (SSLPSPNQLSR) show a composition bias toward polar residues. Positions 297–356 (RRKKRTSIETNVRFALEKSFLANQKPTSEEILLIAEQLHMEKEVIRVWFCNRRQKEKRIN) form a DNA-binding region, homeobox. Residues 389-410 (LSQASSSLSTTVTTLSSAVGTL) form a leucine-zipper region. The span at 416–425 (AGGGAAGGGA) shows a compositional bias: gly residues.

Belongs to the POU transcription factor family. Class-2 subfamily. In terms of assembly, interacts with NR3C1, AR and PGR. Interacts with POU2AF1; the interaction increases POU2F2 transactivation activity. Predominantly expressed in B-cells.

The protein localises to the nucleus. Its activity is regulated as follows. Transactivation activity is enhanced by transcriptional coactivator POU2AF1. Transcription factor that specifically binds to the octamer motif (5'-ATTTGCAT-3'). Regulates IL6 expression in B cells with POU2AF1. Regulates transcription in a number of tissues in addition to activating immunoglobulin gene expression. Modulates transcription transactivation by NR3C1, AR and PGR. The sequence is that of POU domain, class 2, transcription factor 2 (POU2F2) from Sus scrofa (Pig).